The primary structure comprises 88 residues: Small ribosomal subunit protein bS16c (88 aa).

Belongs to the bacterial ribosomal protein bS16 family.

It is found in the plastid. The protein localises to the chloroplast. The chain is Small ribosomal subunit protein bS16c from Sinapis alba (White mustard).